We begin with the raw amino-acid sequence, 61 residues long: Large ribosomal subunit protein uL30 (61 aa).

This sequence belongs to the universal ribosomal protein uL30 family. In terms of assembly, part of the 50S ribosomal subunit.

The protein is Large ribosomal subunit protein uL30 of Clostridioides difficile (strain 630) (Peptoclostridium difficile).